A 332-amino-acid chain; its full sequence is PRKC apoptosis WT1 regulator protein (332 aa).

Polar residues-rich tracts occupy residues M1–D14 and A52–L62. Positions M1–N253 are disordered. A B30.2/SPRY domain-binding motif motif is present at residues E61–G65. The segment covering G65–A79 has biased composition (low complexity). Positions R137–R153 match the Nuclear localization signal motif. The tract at residues R137–A195 is selective for apoptosis induction in cancer cells (SAC). The residue at position 155 (T155) is a Phosphothreonine; by PKA. The segment covering A174–A184 has biased composition (basic and acidic residues). The stretch at Q176–L198 forms a coiled coil. A compositionally biased stretch (polar residues) spans I185–A195. S223 carries the phosphoserine modification. Residues P234 to D247 show a composition bias toward basic and acidic residues. Residues I292–R332 are leucine-zipper.

As to quaternary structure, homooligomer. Interacts (via the C-terminal region) with WT1. Interacts with THAP1. Interacts with AATF. Interacts with BACE1. Interacts with SPSB1 (via B30.2/SPRY domain); this interaction is direct and occurs in association with the Elongin BC complex. Interacts with SPSB2 (via B30.2/SPRY domain); this interaction occurs in association with the Elongin BC complex. Interacts with SPSB4 (via B30.2/SPRY domain); this interaction occurs in association with the Elongin BC complex. Component of a ternary complex composed of SQSTM1 and PRKCZ. Interacts with actin. Preferentially phosphorylated at the Thr-155 by PKC in cancer cells.

The protein resides in the cytoplasm. The protein localises to the nucleus. Pro-apoptotic protein capable of selectively inducing apoptosis in cancer cells, sensitizing the cells to diverse apoptotic stimuli and causing regression of tumors in animal models. Induces apoptosis in certain cancer cells by activation of the Fas prodeath pathway and coparallel inhibition of NF-kappa-B transcriptional activity. Inhibits the transcriptional activation and augments the transcriptional repression mediated by WT1. Down-regulates the anti-apoptotic protein BCL2 via its interaction with WT1. Also seems to be a transcriptional repressor by itself. May be directly involved in regulating the amyloid precursor protein (APP) cleavage activity of BACE1. The polypeptide is PRKC apoptosis WT1 regulator protein (Pawr) (Rattus norvegicus (Rat)).